We begin with the raw amino-acid sequence, 5193 residues long: Usherin (5193 aa).

The signal sequence occupies residues 1-34 (MHYLALSPGFLCYTIKTLILAYLASVLVLAASQG). The Extracellular segment spans residues 35–5033 (VFPRLENVGA…KSTEFYSELW (4999 aa)). N-linked (GlcNAc...) asparagine glycans are attached at residues N230, N258, N274, N358, N415, N448, and N469. In terms of domain architecture, Laminin N-terminal spans 268–514 (QDFRLYNVSL…AVDEIIVSGR (247 aa)). Intrachain disulfides connect C515/C524, C517/C533, C535/C546, C549/C569, C572/C581, C574/C602, C605/C614, C617/C635, C638/C652, C640/C659, C661/C670, C673/C688, C691/C705, C693/C712, C714/C723, C726/C741, C744/C756, C746/C763, C765/C774, C777/C789, C792/C805, C794/C812, C814/C823, and C826/C846. 10 consecutive Laminin EGF-like domains span residues 515-571 (CQCH…NCKP), 572-637 (CQCH…ACKL), 638-690 (CDCN…GCRP), 691-743 (CNCN…GCEP), 744-791 (CQCN…ACEV), 792-848 (CDCS…NCEK), 853-896 (NGSL…GCQA), 897-947 (CDCD…GCLP), 948-998 (CLCH…RCRP), and 999-1049 (CHCH…GCSK). N647 is a glycosylation site (N-linked (GlcNAc...) asparagine). N836 and N853 each carry an N-linked (GlcNAc...) asparagine glycan. 14 disulfides stabilise this stretch: C867/C876, C879/C894, C897/C910, C899/C917, C919/C928, C931/C945, C948/C960, C950/C967, C969/C979, C982/C996, C999/C1011, C1001/C1018, C1020/C1029, and C1032/C1047. A glycan (N-linked (GlcNAc...) asparagine) is linked at N885. N941 carries an N-linked (GlcNAc...) asparagine glycan. N1008 carries N-linked (GlcNAc...) asparagine glycosylation. Fibronectin type-III domains are found at residues 1055 to 1143 (PPPR…TKPE), 1147 to 1241 (GHLN…APPQ), 1242 to 1357 (TQGP…SVPV), 1358 to 1462 (FMAP…AAPA), and 1463 to 1566 (QLRP…LQLK). Residues N1068, N1089, N1150, N1171, and N1222 are each glycosylated (N-linked (GlcNAc...) asparagine). 3 N-linked (GlcNAc...) asparagine glycosylation sites follow: N1382, N1473, and N1626. Laminin G-like domains are found at residues 1511-1700 (TKGT…WEGC) and 1705-1882 (EEGV…QDGC). A disulfide bridge links C1663 with C1700. An N-linked (GlcNAc...) asparagine glycan is attached at N1770. 13 consecutive Fibronectin type-III domains span residues 1847 to 1946 (EPGF…TAPQ), 1948 to 2045 (VPTP…TPQE), 2046 to 2132 (APQE…TAQL), 2133 to 2234 (PPEQ…IPEG), 2235 to 2321 (VPAP…APPE), 2322 to 2421 (GVVN…SVEM), 2422 to 2525 (PPGA…DKPG), 2526 to 2613 (PIDA…TLPG), 2617 to 2713 (GIPS…TRPC), 2717 to 2810 (GVQP…THPA), 2811 to 2914 (PPQE…TLAG), 2918 to 3009 (RGAT…MWEE), and 3013 to 3103 (GMLP…TPSD). C1853 and C1882 are joined by a disulfide. N-linked (GlcNAc...) asparagine glycosylation is present at N1894. Positions 1931-1955 (VSSDWSRGRTLGTAPQSVPTPSRAQ) are disordered. Residues 1943-1955 (TAPQSVPTPSRAQ) show a composition bias toward polar residues. N1958, N2095, N2121, N2177, N2186, N2249, N2276, N2313, N2368, and N2404 each carry an N-linked (GlcNAc...) asparagine glycan. N-linked (GlcNAc...) asparagine glycans are attached at residues N2575, N2647, N2701, N2761, and N2779. N2928, N2998, N3023, N3090, N3208, N3322, and N3411 each carry an N-linked (GlcNAc...) asparagine glycan. Fibronectin type-III domains follow at residues 3395–3489 (CPAT…TRED), 3490–3580 (VPEG…TTQR), 3581–3671 (SPEN…TLQA), 3672–3766 (APQG…TPED), 3769–3857 (PPCN…TLEA), 3858–3955 (APVG…TLEA), 3956–4059 (PPRG…SAPS), 4060–4148 (GLMN…APPD), 4149–4256 (TQMA…APPD), 4257–4346 (GLSP…TPEV), 4347–4437 (PPSE…APPE), 4438–4522 (NMDP…TSPS), 4523–4625 (APSG…VPPL), 4628–4725 (PAPH…TGPA), 4726–4818 (PPEG…THPA), 4819–4921 (PPSG…TKKE), and 4922–5005 (MPQY…YDAA). N-linked (GlcNAc...) asparagine glycosylation is found at N3589, N3645, N3686, N3712, N3723, and N3772. Residues N3976, N4063, N4194, N4218, N4304, N4340, N4365, and N4410 are each glycosylated (N-linked (GlcNAc...) asparagine). N-linked (GlcNAc...) asparagine glycosylation is found at N4556, N4575, N4683, N4716, N4746, N4756, N4765, N4915, and N4934. The chain crosses the membrane as a helical span at residues 5034 to 5054 (FIMVMAVVGLILLAIFLSLIL). Residues 5055–5193 (QRKIHKEPCI…EHTAFTDTHL (139 aa)) lie on the Cytoplasmic side of the membrane. A PDZ-binding motif is present at residues 5191–5193 (THL).

As to quaternary structure, interacts with collagen IV and fibronectin via its laminin EGF-like domains. Interaction with collagen may be required for stable integration into the basement membrane. Interacts with NINL. Interacts with USH1C. Component of USH2 complex, composed of ADGRV1, PDZD7, USH2A and WHRN. Interacts with ADGRV1/MASS1 (via N-terminal PDZ domain). Interacts (via the cytoplasmic region) with WHRN. Interacts (via the cytoplasmic region) with PDZD7. Interacts (via the cytoplasmic region) with VEZT and MYO7A (via MyTH4-FERM domains); the interaction associates VEZT with the USH2 complex at the stereocilia base. In terms of tissue distribution, present in the testis, epididymis, oviduct, spleen, submaxillary gland, and small and large intestines. Not detected in the brain, skin, lung, skeletal muscle, cardiac muscle, liver or kidney. Expressed in smooth muscle of the colon and the epididymis. Also present in select vascular basement membranes. In the cochlea, it is present in virtually every basement membrane. It is particularly high in the strial capillary basement membranes (SCBMs). In the retina, it is again expressed in all of the basement membranes. It is also very prevalent in the lens capsule and the Bruch's layer between the retinal pigment epithelium and the choroid layer, which is very rich in basement membranes. In neonates in it is widely expressed in the basement membranes of the cochlea. Present in the synaptic terminals of retinal photoreceptors (at protein level).

It localises to the cell projection. The protein resides in the stereocilium membrane. Its subcellular location is the photoreceptor inner segment. The protein localises to the secreted. Functionally, involved in hearing and vision as member of the USH2 complex. In the inner ear, required for the maintenance of hair bundle ankle formation, which connects growing stereocilia in developing cochlear hair cells. In retina photoreceptors, the USH2 complex is required for the maintenance of periciliary membrane complex that seems to play a role in regulating intracellular protein transport. The protein is Usherin (Ush2A) of Mus musculus (Mouse).